We begin with the raw amino-acid sequence, 132 residues long: UPF0299 membrane protein YohJ (132 aa).

4 helical membrane passes run 7–27, 31–51, 63–83, and 93–113; these read IIWQ…AGIF, LLPV…VLLA, GCYV…VGVM, and FGPV…VMSW.

It belongs to the UPF0299 family.

It localises to the cell inner membrane. This chain is UPF0299 membrane protein YohJ, found in Shigella dysenteriae serotype 1 (strain Sd197).